A 160-amino-acid chain; its full sequence is Envelope glycoprotein L (160 aa).

An N-terminal signal peptide occupies residues 1–22 (MASHKWLLQMIVFLKTITIAYC). Residues 24–149 (HLQDDTPLFF…TNIPENGCVW (126 aa)) are interaction with gH. Positions 28–160 (DTPLFFGAKP…ADRLFQRVCQ (133 aa)) constitute a gL alphaherpesvirus-type domain. 2 disulfide bridges follow: Cys49/Cys80 and Cys147/Cys159.

Belongs to the herpesviridae glycoprotein L (gL) family. Alphaherpesvirinae gL subfamily. As to quaternary structure, interacts with glycoprotein H (gH); this interaction is necessary for the correct processing and cell surface expression of gH. The heterodimer gH/gL seems to interact with gB trimers during fusion.

The protein localises to the virion membrane. It localises to the host cell membrane. The protein resides in the host Golgi apparatus. Its subcellular location is the host trans-Golgi network. Its function is as follows. The heterodimer glycoprotein H-glycoprotein L is required for the fusion of viral and plasma membranes leading to virus entry into the host cell. Acts as a functional inhibitor of gH and maintains gH in an inhibited form. Upon binding to host integrins, gL dissociates from gH leading to activation of the viral fusion glycoproteins gB and gH. The protein is Envelope glycoprotein L of Varicella-zoster virus (strain Oka vaccine) (HHV-3).